We begin with the raw amino-acid sequence, 1032 residues long: Toll-like receptor 9 (1032 aa).

The first 25 residues, 1–25 (MGPCRGALHPLSLLVQAAALALALA), serve as a signal peptide directing secretion. Over 26–815 (QGTLPAFLPC…QDLRLCLDEA (790 aa)) the chain is Extracellular. Residues C35 and C45 are joined by a disulfide bond. Residue 47-51 (WLFLK) participates in DNA binding. LRR repeat units lie at residues 62-85 (RGNVTSLSLYSNRIHHLHDYDFVH), 87-110 (VHLRRLNLKWNCPPASLSPMHFPC), 122-147 (VPTLEDLNLSYNSITTVPALPSSLVS), 150-166 (LSRTNILVLDPATLAGL), 167-190 (YALRFLFLDGNCYYKNPCQQALQV), 198-221 (LGNLTHLSLKYNNLTVVPRGLPPS), 223-242 (EYLLLSYNHIITLAPEDLAN), 243-268 (LTALRVLDVGGNCRRCDHARNPCREC), 283-306 (LSHLEGLVLRDSSLYSLDPRWFHG), 308-332 (GNLMVLDLSENFLYDCITKTKAFYG), 333-356 (LARLRRLNLSFNYHKKVSFAHLHL), 363-386 (LLSLQELDIHGIFFRSLSKTTLQS), 390-413 (LPMLQRLHLQLNFISQAQLSIFGA), 415-440 (PGLRYVDLSDNRISGAAEPAAATGEV), 472-496 (CRTLNFTLDLSRNNLVTVQPEMFVR), 498-521 (ARLQCLGLSHNSISQAVNGSQFVP), 522-545 (LSNLRVLDLSHNKLDLYHGRSFTE), 547-574 (PRLEALDLSYNSQPFSMRGVGHNLSFVA), 576-600 (LPALRYLSLAHNGIHSRVSQQLRSA), 602-624 (LRALDFSGNTLSQMWAEGDLYLR), 629-652 (LRSLVQLDLSQNRLHTLLPRNLDN), 654-677 (PKSLRLLRLRDNYLAFFNWSSLAL), 678-701 (LPKLEALDLAGNQLKALSNGSLPN), 703-725 (TQLQRLDLSGNSIGFVVPSFFAL), 726-749 (AVRLRELNLSANALKTVEPSWFGS), and 751-774 (AGALKVLDVTANPLHCACGATFVD). An N-linked (GlcNAc...) asparagine glycan is attached at N64. DNA-binding positions include 72 to 77 (SNRIHH) and 95 to 109 (KWNCPPASLSPMHFP). C98 and C110 are joined by a disulfide. The N-linked (GlcNAc...) asparagine glycan is linked to N129. DNA contacts are provided by residues Y132, R152, and 179 to 181 (YYK). C178 and C184 form a disulfide bridge. N200 carries N-linked (GlcNAc...) asparagine glycosylation. Y208 is a binding site for DNA. N-linked (GlcNAc...) asparagine glycans are attached at residues N210 and N242. Cystine bridges form between C255–C268 and C258–C265. A lipid anchor (S-palmitoyl cysteine) is attached at C258. A DNA-binding site is contributed by R262. C265 carries S-palmitoyl cysteine lipidation. N340 carries an N-linked (GlcNAc...) asparagine glycan. The cysteines at positions 472 and 502 are disulfide-linked. N476 and N515 each carry an N-linked (GlcNAc...) asparagine glycan. An N-linked (GlcNAc...) asparagine glycan is attached at N569. N-linked (GlcNAc...) asparagine glycans are attached at residues N671, N696, and N701. An N-linked (GlcNAc...) asparagine glycan is attached at N733. Intrachain disulfides connect C766-C792 and C768-C811. The chain crosses the membrane as a helical span at residues 816 to 836 (LSWVCFSLSLLAVALSLAVPM). Topologically, residues 837–1032 (LHQLCGWDLW…QNFCRGPTTA (196 aa)) are cytoplasmic. The region spanning 868-1013 (LAYDAFVVFD…SFWAQLGTAL (146 aa)) is the TIR domain.

It belongs to the Toll-like receptor family. In terms of assembly, monomer and homodimer. Exists as a monomer in the absence of unmethylated cytidine-phosphate-guanosine (CpG) ligand. Proteolytic processing of an insertion loop (Z-loop) is required for homodimerization upon binding to the unmethylated CpG ligand leading to its activation. Interacts with MYD88 via their respective TIR domains. Interacts with BTK. Interacts (via transmembrane domain) with UNC93B1. Interacts with CD300LH; the interaction may promote full activation of TLR9-triggered innate responses. Interacts with CNPY3 and HSP90B1; this interaction is required for proper folding in the endoplasmic reticulum. Interacts with SMPDL3B. Interacts with CD82; this interaction is essential for TLR9-dependent myddosome formation in response to CpG stimulation. Activated by proteolytic cleavage of the flexible loop between repeats LRR14 and LRR15 within the ectodomain. Cleavage requires UNC93B1. Proteolytically processed by first removing the majority of the ectodomain by either asparagine endopeptidase (AEP) or a cathepsin followed by a trimming event that is solely cathepsin mediated and required for optimal receptor signaling. In terms of processing, palmitoylated by ZDHHC3 in the Golgi regulates TLR9 trafficking from the Golgi to endosomes. Depalmitoylation by PPT1 controls the release of TLR9 from UNC93B1 in endosomes.

It localises to the endoplasmic reticulum membrane. Its subcellular location is the endosome. It is found in the lysosome. The protein localises to the cytoplasmic vesicle. The protein resides in the phagosome. Key component of innate and adaptive immunity. TLRs (Toll-like receptors) control host immune response against pathogens through recognition of molecular patterns specific to microorganisms. TLR9 is a nucleotide-sensing TLR which is activated by unmethylated cytidine-phosphate-guanosine (CpG) dinucleotides. Acts via MYD88 and TRAF6, leading to NF-kappa-B activation, cytokine secretion and the inflammatory response. Upon CpG stimulation, induces B-cell proliferation, activation, survival and antibody production. The polypeptide is Toll-like receptor 9 (TLR9) (Canis lupus familiaris (Dog)).